The following is a 1338-amino-acid chain: Aldehyde oxidase 1 (1338 aa).

The region spanning Ser-5–Ile-92 is the 2Fe-2S ferredoxin-type domain. Positions 113 and 151 each coordinate Mo-molybdopterin. The FAD-binding PCMH-type domain occupies Phe-236–Lys-421. FAD-binding positions include Val-264–Val-271, Ala-345, Ser-354, His-358, Asp-367, and Leu-411. Mo-molybdopterin is bound by residues Ala-806 to Phe-807 and Met-1047. A Phosphoserine modification is found at Ser-1068. Residues Gly-1088–Val-1091, Gln-1203, and Leu-1268 contribute to the Mo-molybdopterin site. Glu-1270 functions as the Proton acceptor; for azaheterocycle hydroxylase activity in the catalytic mechanism.

It belongs to the xanthine dehydrogenase family. In terms of assembly, homodimer. [2Fe-2S] cluster is required as a cofactor. Requires FAD as cofactor. Mo-molybdopterin serves as cofactor. Detected at high levels in liver, also detected in lung, kidney, lacrimal gland and olfactory mucosa.

It localises to the cytoplasm. The enzyme catalyses an aldehyde + O2 + H2O = a carboxylate + H2O2 + H(+). The catalysed reaction is retinal + O2 + H2O = retinoate + H2O2 + H(+). Its function is as follows. Oxidase with broad substrate specificity, oxidizing aromatic azaheterocycles, such as N1-methylnicotinamide, N-methylphthalazinium and phthalazine, as well as aldehydes, such as benzaldehyde, retinal, pyridoxal, and vanillin. Plays a key role in the metabolism of xenobiotics and drugs containing aromatic azaheterocyclic substituents. Participates in the bioactivation of prodrugs such as famciclovir, catalyzing the oxidation step from 6-deoxypenciclovir to penciclovir, which is a potent antiviral agent. Is probably involved in the regulation of reactive oxygen species homeostasis. May be a prominent source of superoxide generation via the one-electron reduction of molecular oxygen. May also catalyze nitric oxide (NO) production via the reduction of nitrite to NO with NADH or aldehyde as electron donor. May play a role in adipogenesis. The chain is Aldehyde oxidase 1 (AOX1) from Macaca fascicularis (Crab-eating macaque).